We begin with the raw amino-acid sequence, 311 residues long: Ornithine carbamoyltransferase (311 aa).

Residues 57–60, Gln84, Arg108, and 135–138 each bind carbamoyl phosphate; these read STRT and HPCQ. L-ornithine contacts are provided by residues Asn166, Asp230, and 234 to 235; that span reads SM. Residues 270 to 271 and Arg298 each bind carbamoyl phosphate; that span reads CL.

This sequence belongs to the aspartate/ornithine carbamoyltransferase superfamily. OTCase family.

It is found in the cytoplasm. It carries out the reaction carbamoyl phosphate + L-ornithine = L-citrulline + phosphate + H(+). It participates in amino-acid biosynthesis; L-arginine biosynthesis; L-arginine from L-ornithine and carbamoyl phosphate: step 1/3. Its function is as follows. Reversibly catalyzes the transfer of the carbamoyl group from carbamoyl phosphate (CP) to the N(epsilon) atom of ornithine (ORN) to produce L-citrulline. This is Ornithine carbamoyltransferase from Carboxydothermus hydrogenoformans (strain ATCC BAA-161 / DSM 6008 / Z-2901).